A 389-amino-acid polypeptide reads, in one-letter code: Leucine aminopeptidase 1 (389 aa).

Residues M1–A18 form the signal peptide. Positions A19 to S89 are excised as a propeptide. N-linked (GlcNAc...) asparagine glycosylation is found at N99, N156, and N180. Zn(2+)-binding residues include H188, D207, E246, and D273. Cysteines 322 and 326 form a disulfide. Residue H355 participates in Zn(2+) binding.

This sequence belongs to the peptidase M28 family. M28E subfamily. Monomer. Requires Zn(2+) as cofactor.

The protein localises to the secreted. Functionally, extracellular aminopeptidase that allows assimilation of proteinaceous substrates. This chain is Leucine aminopeptidase 1 (LAP1), found in Phaeosphaeria nodorum (strain SN15 / ATCC MYA-4574 / FGSC 10173) (Glume blotch fungus).